A 158-amino-acid chain; its full sequence is Rhombotin-2 (158 aa).

LIM zinc-binding domains lie at 30–89 (CGGC…RLFG) and 94–153 (CASC…EWTK).

As to quaternary structure, interacts with BEX2 and KDM5A. Interacts via its LIM domains with ELF2 and LDB1. Also interacts with basic helix-loop-helix protein TAL1/SCL and can assemble in a complex with LMO2 and TAL1/SCL. Expressed in early mouse development in central nervous system, lung, kidney, liver and spleen but only very low levels occur in thymus.

It localises to the nucleus. Functionally, acts with TAL1/SCL to regulate red blood cell development. Also acts with LDB1 to maintain erythroid precursors in an immature state. The chain is Rhombotin-2 (Lmo2) from Mus musculus (Mouse).